A 506-amino-acid chain; its full sequence is MVSIRPDEISAILKQQIEDYDKSVSVSNVGSVLQVGDGIARVYGLQQAMAGELLEFEDGTEGIALNLEDDNVGAVLMGEGLGIQEGSTVKATGKIASVPVGDAMLGRVINSLGRPIDGKGDIAASETRLIESMAPGIIQRKSVHEPMQTGITAIDAMIPVGRGQRELIIGDRQTGKTAIAIDTILNQADQDMICVYVAIGQKAASVANVVEVLRERGALGYTVIVAASASEPAALQYLAPYTGASIAEYFMYKGKATLVIYDDLSKQAAAYRQMSLLLRRPPGREAYPGDVFYCHSRLLERAAKLSDAMGKGSMTALPIIETQAGDVSAYIPTNVISITDGQIFLSSDLFNSGLRPAINVGISVSRVGGAAQTKAIKKIAGTLKLELAQFDELAAFSQFASDLDAATQQQLSRGKRLRELLKQPQFSPLILAEQVAIVYAGVKGLIDAVPVDQVVNFSRELREYLKSNKPEFINEIQEKKVLSPEAESVLKAAISEVVSTMVASAN.

ATP is bound at residue 170-177 (GDRQTGKT).

This sequence belongs to the ATPase alpha/beta chains family. In terms of assembly, F-type ATPases have 2 components, CF(1) - the catalytic core - and CF(0) - the membrane proton channel. CF(1) has five subunits: alpha(3), beta(3), gamma(1), delta(1), epsilon(1). CF(0) has four main subunits: a(1), b(1), b'(1) and c(9-12).

It is found in the cellular thylakoid membrane. It catalyses the reaction ATP + H2O + 4 H(+)(in) = ADP + phosphate + 5 H(+)(out). Produces ATP from ADP in the presence of a proton gradient across the membrane. The alpha chain is a regulatory subunit. In Synechococcus sp. (strain CC9902), this protein is ATP synthase subunit alpha.